The following is a 310-amino-acid chain: Methionyl-tRNA formyltransferase (310 aa).

109–112 contacts (6S)-5,6,7,8-tetrahydrofolate; sequence SLLP.

This sequence belongs to the Fmt family.

It carries out the reaction L-methionyl-tRNA(fMet) + (6R)-10-formyltetrahydrofolate = N-formyl-L-methionyl-tRNA(fMet) + (6S)-5,6,7,8-tetrahydrofolate + H(+). Attaches a formyl group to the free amino group of methionyl-tRNA(fMet). The formyl group appears to play a dual role in the initiator identity of N-formylmethionyl-tRNA by promoting its recognition by IF2 and preventing the misappropriation of this tRNA by the elongation apparatus. The polypeptide is Methionyl-tRNA formyltransferase (Parvibaculum lavamentivorans (strain DS-1 / DSM 13023 / NCIMB 13966)).